The chain runs to 510 residues: Amidophosphoribosyltransferase (510 aa).

Cys2 acts as the Nucleophile in catalysis. The Glutamine amidotransferase type-2 domain maps to 2-239 (CGILGIVLAN…PGEAVIIPKN (238 aa)). Mg(2+) is bound by residues Asp373 and Asp374.

This sequence in the C-terminal section; belongs to the purine/pyrimidine phosphoribosyltransferase family. It depends on Mg(2+) as a cofactor.

The enzyme catalyses 5-phospho-beta-D-ribosylamine + L-glutamate + diphosphate = 5-phospho-alpha-D-ribose 1-diphosphate + L-glutamine + H2O. It functions in the pathway purine metabolism; IMP biosynthesis via de novo pathway; N(1)-(5-phospho-D-ribosyl)glycinamide from 5-phospho-alpha-D-ribose 1-diphosphate: step 1/2. The polypeptide is Amidophosphoribosyltransferase (ADE4) (Saccharomyces cerevisiae (strain ATCC 204508 / S288c) (Baker's yeast)).